The following is a 436-amino-acid chain: GTPase Obg (436 aa).

The region spanning 2–160 is the Obg domain; that stretch reads SMFLDTAKVS…RELALELKIL (159 aa). One can recognise an OBG-type G domain in the interval 161-338; it reads ADVGLVGFPS…LLDATAQLLA (178 aa). Residues 167–174, 192–196, 214–217, 284–287, and 319–321 each bind GTP; these read GFPSVGKS, FTTIV, DLPG, NKMD, and SGI. 2 residues coordinate Mg(2+): Ser174 and Thr194. In terms of domain architecture, OCT spans 358–436; it reads GFEEEEKAFD…IGKFEFEFVD (79 aa).

It belongs to the TRAFAC class OBG-HflX-like GTPase superfamily. OBG GTPase family. Monomer. Mg(2+) is required as a cofactor.

The protein localises to the cytoplasm. In terms of biological role, an essential GTPase which binds GTP, GDP and possibly (p)ppGpp with moderate affinity, with high nucleotide exchange rates and a fairly low GTP hydrolysis rate. Plays a role in control of the cell cycle, stress response, ribosome biogenesis and in those bacteria that undergo differentiation, in morphogenesis control. This Streptococcus mutans serotype c (strain ATCC 700610 / UA159) protein is GTPase Obg.